The sequence spans 229 residues: GTP:AMP phosphotransferase (229 aa).

10–15 (GVGKGT) is an a ribonucleoside 5'-triphosphate binding site. Residues 30-59 (NVGNILRNEIKKESNIGKEVQNVVRSGNLV) form an NMP region. AMP contacts are provided by residues R36, 57–59 (NLV), G87, 87–90 (GFPR), and Q94. An LID region spans residues 123-170 (GRRICNICDKNFNVSNIQQDSFDMPPILPSKDCIQCNGHTNLIKRKDD). R178 provides a ligand contact to AMP.

It belongs to the adenylate kinase family.

Its subcellular location is the mitochondrion. It catalyses the reaction a ribonucleoside 5'-triphosphate + AMP = a ribonucleoside 5'-diphosphate + ADP. It carries out the reaction GTP + AMP = GDP + ADP. With respect to regulation, inhibited by the dinucleoside pentaphosphate compound P1,P5-di(guanosine-5') pentaphosphate (GP5A). Functionally, catalyzes the reversible transfer of the terminal phosphate group between GTP and AMP. Has very low activity with UTP, ITP, CTP and IMP and no activity with ATP, GMP, CMP and UMP in vitro. The sequence is that of GTP:AMP phosphotransferase from Plasmodium falciparum (isolate 3D7).